The following is a 668-amino-acid chain: Packaging protein UL32 homolog (668 aa).

The segment covering 1–10 (MNPSTHVSSN) has biased composition (polar residues). Residues 1–35 (MNPSTHVSSNGPTTPPHGPHTTFLPPTSPAPSTSS) are disordered. The span at 19 to 35 (PHTTFLPPTSPAPSTSS) shows a compositional bias: low complexity. C200, C203, H276, and C282 together coordinate Zn(2+). Positions 200–282 (CNLCAIISIC…FHLHFFINRC (83 aa)) are zinc finger 1. The disordered stretch occupies residues 401 to 430 (IEEEEDEEGGEKGGDDPGRHNGGGTSGGFS). The span at 410-419 (GEKGGDDPGR) shows a compositional bias: basic and acidic residues. Zn(2+)-binding residues include C459, C462, H567, and C574. The interval 459-574 (CLLCELMACS…YKHFFCDPQC (116 aa)) is zinc finger 2.

The protein belongs to the herpesviridae UL32 protein family.

Its subcellular location is the host cytoplasm. The protein localises to the host nucleus. Its function is as follows. Plays a role in efficient localization of neo-synthesized capsids to nuclear replication compartments, thereby controlling cleavage and packaging of virus genomic DNA. The sequence is that of Packaging protein UL32 homolog (UL52) from Homo sapiens (Human).